Reading from the N-terminus, the 270-residue chain is MRLTVVGANGKMGRELITAIQRREDVELCAVLVRKGSPFVDKDASILTGSDFLNIRITDDPENAFSNTEGILDFSQPQASILYANYAAQKSLVHIIGTTGFSKTEEEKIADFAKDTTIVKSGNMSLGVNLLASLVKKAAKALEVDDFDIEIYEMHHSGKVDAPSGTALLLGQAAAEGRNVMLKNVSVNARNGYTGEREKGTIGFACSRGGTVVGDHSITFAGPNERIVLSHVAQDRSIFANGALKAALWAKNHENGLYSMLDVLGLKDEF.

7–12 (GANGKM) is a binding site for NAD(+). Arg-34 is an NADP(+) binding site. NAD(+)-binding positions include 97–99 (GTT) and 121–124 (SGNM). His-155 (proton donor/acceptor) is an active-site residue. A (S)-2,3,4,5-tetrahydrodipicolinate-binding site is contributed by His-156. Residue Lys-159 is the Proton donor of the active site. Residue 165-166 (GT) participates in (S)-2,3,4,5-tetrahydrodipicolinate binding.

Belongs to the DapB family.

Its subcellular location is the cytoplasm. The enzyme catalyses (S)-2,3,4,5-tetrahydrodipicolinate + NAD(+) + H2O = (2S,4S)-4-hydroxy-2,3,4,5-tetrahydrodipicolinate + NADH + H(+). It carries out the reaction (S)-2,3,4,5-tetrahydrodipicolinate + NADP(+) + H2O = (2S,4S)-4-hydroxy-2,3,4,5-tetrahydrodipicolinate + NADPH + H(+). Its pathway is amino-acid biosynthesis; L-lysine biosynthesis via DAP pathway; (S)-tetrahydrodipicolinate from L-aspartate: step 4/4. Functionally, catalyzes the conversion of 4-hydroxy-tetrahydrodipicolinate (HTPA) to tetrahydrodipicolinate. This Bartonella quintana (strain Toulouse) (Rochalimaea quintana) protein is 4-hydroxy-tetrahydrodipicolinate reductase.